We begin with the raw amino-acid sequence, 469 residues long: Pup--protein ligase (469 aa).

Glu-9 is a binding site for Mg(2+). Arg-53 lines the ATP pocket. Tyr-55 contacts Mg(2+). The active-site Proton acceptor is the Asp-57. Glu-63 is a Mg(2+) binding site. 2 residues coordinate ATP: Thr-66 and Trp-430.

This sequence belongs to the Pup ligase/Pup deamidase family. Pup-conjugating enzyme subfamily.

The enzyme catalyses ATP + [prokaryotic ubiquitin-like protein]-L-glutamate + [protein]-L-lysine = ADP + phosphate + N(6)-([prokaryotic ubiquitin-like protein]-gamma-L-glutamyl)-[protein]-L-lysine.. It functions in the pathway protein degradation; proteasomal Pup-dependent pathway. It participates in protein modification; protein pupylation. Its function is as follows. Catalyzes the covalent attachment of the prokaryotic ubiquitin-like protein modifier Pup to the proteasomal substrate proteins, thereby targeting them for proteasomal degradation. This tagging system is termed pupylation. The ligation reaction involves the side-chain carboxylate of the C-terminal glutamate of Pup and the side-chain amino group of a substrate lysine. The chain is Pup--protein ligase from Kocuria rhizophila (strain ATCC 9341 / DSM 348 / NBRC 103217 / DC2201).